The chain runs to 272 residues: MICOS complex subunit MIC27 (272 aa).

The transit peptide at methionine 1–glutamate 24 directs the protein to the mitochondrion. Topologically, residues serine 28–aspartate 107 are mitochondrial intermembrane. Residues phenylalanine 108–alanine 126 form a helical membrane-spanning segment. Over arginine 127–lysine 134 the chain is Mitochondrial matrix. The chain crosses the membrane as a helical span at residues isoleucine 135–alanine 152. Residues glutamine 153–serine 272 lie on the Mitochondrial intermembrane side of the membrane. Positions serine 187–serine 272 are disordered. 2 stretches are compositionally biased toward polar residues: residues lysine 188–glutamine 198 and isoleucine 206–threonine 245.

Belongs to the apolipoprotein O/MICOS complex subunit Mic27 family. As to quaternary structure, component of the mitochondrial contact site and cristae organizing system (MICOS) complex (also known as MINOS or MitOS complex).

The protein resides in the mitochondrion inner membrane. Functionally, component of the MICOS complex, a large protein complex of the mitochondrial inner membrane that plays crucial roles in the maintenance of crista junctions, inner membrane architecture, and formation of contact sites to the outer membrane. This Gallus gallus (Chicken) protein is MICOS complex subunit MIC27 (APOOL).